Here is a 343-residue protein sequence, read N- to C-terminus: MAPMRKKSTLKLLTLLVLFIFLTSFFLNYSHTVVTTAWFPKQMVIELSENFKKLMKYPYRPCTCTRCIEEQRVSAWFDERFNRSMQPLLTAKNAHLEEDTYKWWLRLQREKQPNNLNDTIRELFQVVPGNVDPLLEKRLVSCRRCAVVGNSGNLKESYYGPQIDSHDFVLRMNKAPTEGFEADVGSKTTHHFVYPESFRELAQEVSMILVPFKTTDLEWVISATTTGRISHTYVPVPAKIKVKKEKILIYHPAFIKYVFDRWLQGHGRYPSTGILSVIFSLHICDEVDLYGFGADSKGNWHHYWENNPSAGAFRKTGVHDGDFESNVTTILASINKIRIFKGR.

Topologically, residues 1-11 are cytoplasmic; the sequence is MAPMRKKSTLK. The helical; Signal-anchor for type II membrane protein transmembrane segment at 12–27 threads the bilayer; that stretch reads LLTLLVLFIFLTSFFL. An N-linked (GlcNAc...) asparagine glycan is attached at N28. The Lumenal portion of the chain corresponds to 28 to 343; it reads NYSHTVVTTA…INKIRIFKGR (316 aa). 3 disulfide bridges follow: C62-C67, C64-C142, and C145-C284. N82 carries N-linked (GlcNAc...) asparagine glycosylation. Residue Q108 coordinates substrate. N117 carries N-linked (GlcNAc...) asparagine glycosylation. The substrate site is built by N150, N173, Y233, Y269, G273, G293, H302, and H319. The N-linked (GlcNAc...) asparagine glycan is linked to N326.

Belongs to the glycosyltransferase 29 family. In terms of processing, the soluble form derives from the membrane form by proteolytic processing. As to expression, the long isoform is abundant in salivary gland, liver, lung, and colon mucosa. Both long and short forms are detected in submaxillary salivary glands.

It is found in the golgi apparatus. The protein localises to the golgi stack membrane. Its subcellular location is the trans-Golgi network membrane. The protein resides in the secreted. The enzyme catalyses a beta-D-galactosyl-(1-&gt;3)-N-acetyl-alpha-D-galactosaminyl derivative + CMP-N-acetyl-beta-neuraminate = an N-acetyl-alpha-neuraminyl-(2-&gt;3)-beta-D-galactosyl-(1-&gt;3)-N-acetyl-alpha-D-galactosaminyl derivative + CMP + H(+). It carries out the reaction a ganglioside GM1 (d18:1(4E)) + CMP-N-acetyl-beta-neuraminate = a ganglioside GD1a (d18:1(4E)) + CMP + H(+). It catalyses the reaction ganglioside GM1 (d18:1(4E)/18:0) + CMP-N-acetyl-beta-neuraminate = ganglioside GD1a (18:1(4E)/18:0) + CMP + H(+). The catalysed reaction is a ganglioside GA1 (d18:1(4E)) + CMP-N-acetyl-beta-neuraminate = a ganglioside GM1b (d18:1(4E)) + CMP + H(+). The enzyme catalyses a ganglioside GD1b + CMP-N-acetyl-beta-neuraminate = a ganglioside GT1b + CMP + H(+). It carries out the reaction a 3-O-[beta-D-galactosyl-(1-&gt;3)-N-acetyl-alpha-D-galactosaminyl]-L-threonyl-[protein] + CMP-N-acetyl-beta-neuraminate = a 3-O-[N-acetyl-alpha-neuraminyl-(2-&gt;3)-beta-D-galactosyl-(1-&gt;3)-N-acetyl-alpha-D-galactosaminyl]-L-threonyl-[protein] + CMP + H(+). It catalyses the reaction a 3-O-[beta-D-galactosyl-(1-&gt;3)-N-acetyl-alpha-D-galactosaminyl]-L-seryl-[protein] + CMP-N-acetyl-beta-neuraminate = 3-O-[N-acetyl-alpha-neuraminyl-(2-&gt;3)-beta-D-galactosyl-(1-&gt;3)-N-acetyl-alpha-D-galactosaminyl]-L-seryl-[protein] + CMP + H(+). It functions in the pathway protein modification; protein glycosylation. It participates in glycolipid biosynthesis. In terms of biological role, a beta-galactoside alpha2-&gt;3 sialyltransferase involved in terminal sialylation of glycoproteins and glycolipids. Catalyzes the transfer of sialic acid (N-acetyl-neuraminic acid; Neu5Ac) from the nucleotide sugar donor CMP-Neu5Ac onto acceptor Galbeta-(1-&gt;3)-GalNAc-terminated glycoconjugates through an alpha2-3 linkage. Adds sialic acid to the core 1 O-glycan, Galbeta-(1-&gt;3)-GalNAc-O-Ser/Thr, which is a major structure of mucin-type O-glycans. As part of a homeostatic mechanism that regulates CD8-positive T cell numbers, sialylates core 1 O-glycans of T cell glycoproteins, SPN/CD43 and PTPRC/CD45. Prevents premature apoptosis of thymic CD8-positive T cells prior to peripheral emigration, whereas in the secondary lymphoid organs controls the survival of CD8-positive memory T cells generated following a successful immune response. Transfers sialic acid to asialofetuin, presumably onto Galbeta-(1-&gt;3)-GalNAc-O-Ser. Sialylates GM1a, GA1 and GD1b gangliosides to form GD1a, GM1b and GT1b, respectively. This chain is CMP-N-acetylneuraminate-beta-galactosamide-alpha-2,3-sialyltransferase 1 (ST3GAL1), found in Sus scrofa (Pig).